The sequence spans 401 residues: Beta-lactamase (401 aa).

Residues 1-39 form the signal peptide; the sequence is MKLFTSTLTAKKSSTHKPLISLALSVLISTLLISETAQA. Serine 102 (acyl-ester intermediate) is an active-site residue. The active-site Proton acceptor is the tyrosine 188. 353–355 is a binding site for substrate; the sequence is KTG.

Belongs to the class-C beta-lactamase family.

The protein localises to the secreted. It catalyses the reaction a beta-lactam + H2O = a substituted beta-amino acid. This protein is a serine beta-lactamase with a substrate specificity for cephalosporins. This Psychrobacter immobilis protein is Beta-lactamase (ampC).